Reading from the N-terminus, the 272-residue chain is NADPH-dependent 7-cyano-7-deazaguanine reductase (272 aa).

Residue 82–84 (IES) participates in substrate binding. 84–85 (SK) provides a ligand contact to NADPH. The Thioimide intermediate role is filled by Cys-178. The Proton donor role is filled by Asp-185. 217-218 (HE) provides a ligand contact to substrate. 246–247 (RG) provides a ligand contact to NADPH.

It belongs to the GTP cyclohydrolase I family. QueF type 2 subfamily. Homodimer.

It is found in the cytoplasm. The catalysed reaction is 7-aminomethyl-7-carbaguanine + 2 NADP(+) = 7-cyano-7-deazaguanine + 2 NADPH + 3 H(+). Its pathway is tRNA modification; tRNA-queuosine biosynthesis. Functionally, catalyzes the NADPH-dependent reduction of 7-cyano-7-deazaguanine (preQ0) to 7-aminomethyl-7-deazaguanine (preQ1). This chain is NADPH-dependent 7-cyano-7-deazaguanine reductase, found in Stenotrophomonas maltophilia (strain K279a).